A 149-amino-acid polypeptide reads, in one-letter code: Large ribosomal subunit protein bL9 (149 aa).

Belongs to the bacterial ribosomal protein bL9 family.

Functionally, binds to the 23S rRNA. In Xanthomonas oryzae pv. oryzae (strain MAFF 311018), this protein is Large ribosomal subunit protein bL9.